A 110-amino-acid polypeptide reads, in one-letter code: UPF0060 membrane protein Ajs_2087 (110 aa).

4 helical membrane passes run 7 to 27 (LALF…PWLW), 33 to 53 (SAWL…LLTL), 63 to 83 (AAYG…VDGV), and 86 to 106 (GPWD…IAFA).

Belongs to the UPF0060 family.

It localises to the cell inner membrane. This chain is UPF0060 membrane protein Ajs_2087, found in Acidovorax sp. (strain JS42).